Reading from the N-terminus, the 156-residue chain is SCP2 sterol-binding domain-containing protein 1 (156 aa).

In terms of domain architecture, SCP2 spans 44 to 156 (TVPVFEDISQ…ERVFKDWAKW (113 aa)).

In Bos taurus (Bovine), this protein is SCP2 sterol-binding domain-containing protein 1 (SCP2D1).